We begin with the raw amino-acid sequence, 429 residues long: Glutamate-1-semialdehyde 2,1-aminomutase 1 (429 aa).

An N6-(pyridoxal phosphate)lysine modification is found at lysine 268.

It belongs to the class-III pyridoxal-phosphate-dependent aminotransferase family. HemL subfamily. Homodimer. Requires pyridoxal 5'-phosphate as cofactor.

The protein resides in the cytoplasm. It catalyses the reaction (S)-4-amino-5-oxopentanoate = 5-aminolevulinate. It functions in the pathway porphyrin-containing compound metabolism; protoporphyrin-IX biosynthesis; 5-aminolevulinate from L-glutamyl-tRNA(Glu): step 2/2. The protein is Glutamate-1-semialdehyde 2,1-aminomutase 1 of Listeria innocua serovar 6a (strain ATCC BAA-680 / CLIP 11262).